The chain runs to 509 residues: Scavenger receptor class B member 1 (509 aa).

At 1–11 (MGGSSRARWVA) the chain is on the cytoplasmic side. Residues 12–32 (LGLGALGLLFAALGVVMILMV) traverse the membrane as a helical segment. At 33–440 (PSLIKQQVLK…YTQLVLMPQV (408 aa)) the chain is on the extracellular side. Asn102, Asn108, Asn116, Asn173, Asn212, Asn227, Asn255, Asn288, Asn310, Asn330, and Asn383 each carry an N-linked (GlcNAc...) asparagine glycan. An intrachain disulfide couples Cys251 to Cys384. A helical membrane pass occupies residues 441 to 461 (LHYAQYVLLGLGGLLLLVPII). The S-palmitoyl cysteine moiety is linked to residue Cys462. The Cytoplasmic segment spans residues 462–509 (CQLRSQEKCFLFWSGSKKGSQDKEAIQAYSESLMSPAAKGTVLQEAKL).

The protein belongs to the CD36 family. As to quaternary structure, the C-terminal region binds to PDZK1. Post-translationally, N-glycosylated. In terms of processing, the six cysteines of the extracellular domain are all involved in intramolecular disulfide bonds. Expressed primarily in liver, ovary and adrenal gland, and, at lower levels in other non-placental steroidogenic tissues, including adipose tissue, mammary gland and testis (at protein level). Isoform 2 is expressed at lower levels than isoform 1 in liver, testis and adrenal gland. At the mRNA, but not at the protein level, isoform 2 is the predominant isoform in testis (80%).

The protein localises to the cell membrane. It localises to the membrane. The protein resides in the caveola. Its function is as follows. Receptor for different ligands such as phospholipids, cholesterol ester, lipoproteins, phosphatidylserine and apoptotic cells. Both isoform 1 and isoform 2 act as receptors for HDL, mediating selective uptake of cholesteryl ether and HDL-dependent cholesterol efflux. Also facilitates the flux of free and esterified cholesterol between the cell surface and apoB-containing lipoproteins and modified lipoproteins, although less efficiently than HDL. May be involved in the phagocytosis of apoptotic cells, via its phosphatidylserine binding activity. This chain is Scavenger receptor class B member 1 (Scarb1), found in Mus musculus (Mouse).